Consider the following 131-residue polypeptide: Translation initiation factor 5A (131 aa).

Hypusine is present on Lys-36.

The protein belongs to the eIF-5A family.

Its subcellular location is the cytoplasm. Its function is as follows. Functions by promoting the formation of the first peptide bond. The polypeptide is Translation initiation factor 5A (eIF5A) (Metallosphaera sedula (strain ATCC 51363 / DSM 5348 / JCM 9185 / NBRC 15509 / TH2)).